We begin with the raw amino-acid sequence, 283 residues long: Shikimate dehydrogenase (NADP(+)) (283 aa).

Residues 18–20 and T66 contribute to the shikimate site; that span reads SYS. K70 serves as the catalytic Proton acceptor. The shikimate site is built by N91 and D106. NADP(+) is bound by residues 130–134 and M225; that span reads GAGGA. Position 227 (Y227) interacts with shikimate. NADP(+) is bound at residue G248.

Belongs to the shikimate dehydrogenase family. As to quaternary structure, homodimer.

It catalyses the reaction shikimate + NADP(+) = 3-dehydroshikimate + NADPH + H(+). Its pathway is metabolic intermediate biosynthesis; chorismate biosynthesis; chorismate from D-erythrose 4-phosphate and phosphoenolpyruvate: step 4/7. Its function is as follows. Involved in the biosynthesis of the chorismate, which leads to the biosynthesis of aromatic amino acids. Catalyzes the reversible NADPH linked reduction of 3-dehydroshikimate (DHSA) to yield shikimate (SA). The protein is Shikimate dehydrogenase (NADP(+)) of Pelodictyon phaeoclathratiforme (strain DSM 5477 / BU-1).